A 336-amino-acid polypeptide reads, in one-letter code: Effector SCP41 (336 aa).

The signal sequence occupies residues 1-19 (MRTETASLLLLAALSVAEE). Disordered stretches follow at residues 59–99 (LFSP…STNN) and 189–230 (PVGN…GQKG). Residues 63–74 (QQQQQQQQQQQQ) are compositionally biased toward low complexity.

As to quaternary structure, interacts with A.thaliana CBP60G; the interaction is direct. Interacts with A.thaliana SARD1. Interacts with G.hirsutum CBP60B.

It is found in the secreted. The protein resides in the host nucleus. Its function is as follows. Effector that binds transcription regulators in the host plant to suppress the host's innate immune response. Inhibits the host plant transcription regulators CBP60G and SARD1. The sequence is that of Effector SCP41 from Verticillium dahliae (strain VdLs.17 / ATCC MYA-4575 / FGSC 10137) (Verticillium wilt).